A 326-amino-acid polypeptide reads, in one-letter code: Protein FAM50 homolog (326 aa).

Residues 76-112 are disordered; that stretch reads EISNRDLQVARGASSSTSLAKDSQEAREKEEHVAKHT. Residues 97–109 show a composition bias toward basic and acidic residues; that stretch reads DSQEAREKEEHVA.

Belongs to the FAM50 family.

This is Protein FAM50 homolog from Caenorhabditis briggsae.